A 256-amino-acid chain; its full sequence is MSEPIHQPFWLDSKPVVFPPTHLAMTEPDGLLAVGGDLTPEWLLNAYHKGIFPWFNEDDPILWWTPNPRSVLFINSLKVRRSLIKTIRKQQFTVTLDQQFEDVMHQCANIERHDQDGTWISEEMLSAYTQLHKSGHAHSVEVWKDNQLVGGLYGVAIGKVFFGESMFSKVPDASKIALVALCQQLKAWGFRIIDTQMETAHLRSLGATLISREYFESILKQETHKDFAPKPWTLEVDWQAPFLAQPTIKKQKTTTP.

Belongs to the L/F-transferase family.

It is found in the cytoplasm. The enzyme catalyses N-terminal L-lysyl-[protein] + L-leucyl-tRNA(Leu) = N-terminal L-leucyl-L-lysyl-[protein] + tRNA(Leu) + H(+). The catalysed reaction is N-terminal L-arginyl-[protein] + L-leucyl-tRNA(Leu) = N-terminal L-leucyl-L-arginyl-[protein] + tRNA(Leu) + H(+). It carries out the reaction L-phenylalanyl-tRNA(Phe) + an N-terminal L-alpha-aminoacyl-[protein] = an N-terminal L-phenylalanyl-L-alpha-aminoacyl-[protein] + tRNA(Phe). Its function is as follows. Functions in the N-end rule pathway of protein degradation where it conjugates Leu, Phe and, less efficiently, Met from aminoacyl-tRNAs to the N-termini of proteins containing an N-terminal arginine or lysine. The sequence is that of Leucyl/phenylalanyl-tRNA--protein transferase from Hydrogenovibrio crunogenus (strain DSM 25203 / XCL-2) (Thiomicrospira crunogena).